A 217-amino-acid polypeptide reads, in one-letter code: NADPH-dependent 3-demethoxyubiquinone 3-hydroxylase, mitochondrial (217 aa).

A mitochondrion-targeting transit peptide spans 1–35 (MSCAGAAAAPRLWRLRPGARRSLSAYGRRTSVRFR). The segment at 11 to 29 (RLWRLRPGARRSLSAYGRR) is required for nuclear localization. Tandem repeats lie at residues 48–129 (AVDR…TALL) and 130–217 (GKEG…SERL). Residues 48-217 (AVDRIIRVDH…RVAIYLSERL (170 aa)) are 2 X approximate tandem repeats. Residue R51 coordinates NADH. Positions 60, 90, 93, 142, 178, and 181 each coordinate Fe cation. The NADH site is built by Y212 and R216.

This sequence belongs to the COQ7 family. Component of a multi-subunit COQ enzyme complex. Interacts with COQ8B and COQ6. Interacts with COQ9. It depends on Fe cation as a cofactor. As to expression, expressed dominantly in heart and skeletal muscle.

Its subcellular location is the mitochondrion inner membrane. It localises to the mitochondrion. It is found in the nucleus. The protein resides in the chromosome. The enzyme catalyses a 5-methoxy-2-methyl-3-(all-trans-polyprenyl)benzoquinone + NADH + O2 = a 3-demethylubiquinone + NAD(+) + H2O. It participates in cofactor biosynthesis; ubiquinone biosynthesis. Catalyzes the hydroxylation of the 5-methoxy-2-methyl-3-(all-trans-polyprenyl)benzoquinone at the C6 position and participates in the biosynthesis of ubiquinone. Catalyzes the reaction through a substrate-mediated reduction pathway, whereby NADH shuttles electrons to 5-methoxy-2-methyl-3-(all-trans-decaprenyl)benzoquinone, which then transfers the electrons to the two Fe(3+) centers. The binding of 5-methoxy-2-methyl-3-(all-trans-polyprenyl)benzoquinone (DMQn) mediates reduction of the diiron center by nicotinamide adenine dinucleotide (NADH) and initiates oxygen activation for subsequent DMQ hydroxylation. The physiological substrates are 5-methoxy-2-methyl-3-(all-trans-nonaprenyl)benzoquinone (DMQ(9)) and 5-methoxy-2-methyl-3-(all-trans-decaprenyl)benzoquinone (DMQ(10)), however in vitro the enzyme does not have any specificity concerning the length of the polyprenyl tail, and accepts tails of various lengths with similar efficiency. Also has a structural role in the COQ enzyme complex, stabilizing other COQ polypeptides. Involved in lifespan determination in a ubiquinone-independent manner. Plays a role in modulating mitochondrial stress responses, acting in the nucleus, perhaps via regulating gene expression, independent of its characterized mitochondrial function in ubiquinone biosynthesis. The chain is NADPH-dependent 3-demethoxyubiquinone 3-hydroxylase, mitochondrial from Homo sapiens (Human).